A 469-amino-acid polypeptide reads, in one-letter code: UDP-N-acetylmuramate--L-alanine ligase (469 aa).

123–129 (GSHGKTT) contacts ATP.

Belongs to the MurCDEF family.

It localises to the cytoplasm. The enzyme catalyses UDP-N-acetyl-alpha-D-muramate + L-alanine + ATP = UDP-N-acetyl-alpha-D-muramoyl-L-alanine + ADP + phosphate + H(+). The protein operates within cell wall biogenesis; peptidoglycan biosynthesis. Its function is as follows. Cell wall formation. In Synechococcus sp. (strain CC9605), this protein is UDP-N-acetylmuramate--L-alanine ligase.